We begin with the raw amino-acid sequence, 142 residues long: Protein SprT-like (142 aa).

Positions 4-138 (YVKKVSIEDF…FACGYCHGRL (135 aa)) constitute a SprT-like domain. H62 is a Zn(2+) binding site. E63 is an active-site residue. H66 provides a ligand contact to Zn(2+).

The protein belongs to the SprT family. Requires Zn(2+) as cofactor.

The protein localises to the cytoplasm. The chain is Protein SprT-like from Streptococcus agalactiae serotype Ia (strain ATCC 27591 / A909 / CDC SS700).